A 275-amino-acid polypeptide reads, in one-letter code: tRNA uridine(34) hydroxylase (275 aa).

Positions 122–218 (SRSDVYTIDT…YFKSTQNKNS (97 aa)) constitute a Rhodanese domain. The Cysteine persulfide intermediate role is filled by C178.

The protein belongs to the TrhO family.

It carries out the reaction uridine(34) in tRNA + AH2 + O2 = 5-hydroxyuridine(34) in tRNA + A + H2O. In terms of biological role, catalyzes oxygen-dependent 5-hydroxyuridine (ho5U) modification at position 34 in tRNAs. This Ehrlichia chaffeensis (strain ATCC CRL-10679 / Arkansas) protein is tRNA uridine(34) hydroxylase.